The sequence spans 276 residues: Secretagogin (276 aa).

6 EF-hand domains span residues 12 to 47 (LDAA…VLTK), 58 to 93 (NVWK…EDEN), 105 to 140 (DSSV…LFLH), 149 to 184 (KLEE…QENF), 197 to 232 (ERKR…MMEL), and 240 to 276 (VDLD…KINP). Asp71, Ser73, Asp75, His77, Glu82, Asp118, Asp120, Ser122, Glu129, Asp162, Asn164, Asp166, Arg168, Asp173, Asp210, Ser212, Thr214, Glu221, Asp254, Asn256, Asp258, Lys260, and Glu265 together coordinate Ca(2+).

The protein resides in the cytoplasm. It localises to the secreted. Its subcellular location is the cytoplasmic vesicle. It is found in the secretory vesicle membrane. In Sus scrofa (Pig), this protein is Secretagogin (SCGN).